A 195-amino-acid polypeptide reads, in one-letter code: MRVAEVTRNTSETQIRVSLNLDGSGRQKLASGVPFLDHMLDQIARHGMFDLEVEATGDTHIDDHHTVEDVGITLGQAVARAIGDKKGITRYGHSYVPLDECLSRVVIDFSGRPGLEFHVPFTRARVGSFDVDLTIEFFRGFVNHAGVTLHIDNLRGINAHHQCETVFKAFGRALRMAVELDPRAANTIPSTKGTL.

It belongs to the imidazoleglycerol-phosphate dehydratase family.

It is found in the cytoplasm. It carries out the reaction D-erythro-1-(imidazol-4-yl)glycerol 3-phosphate = 3-(imidazol-4-yl)-2-oxopropyl phosphate + H2O. It functions in the pathway amino-acid biosynthesis; L-histidine biosynthesis; L-histidine from 5-phospho-alpha-D-ribose 1-diphosphate: step 6/9. This chain is Imidazoleglycerol-phosphate dehydratase, found in Cupriavidus taiwanensis (strain DSM 17343 / BCRC 17206 / CCUG 44338 / CIP 107171 / LMG 19424 / R1) (Ralstonia taiwanensis (strain LMG 19424)).